The chain runs to 36 residues: Photosystem II reaction center protein M (36 aa).

Met1 is modified (blocked amino end (Met)). Residues 1–11 (MEVNQLGFIAT) lie on the Lumenal side of the membrane. A helical transmembrane segment spans residues 12–27 (ALFVLVPSVFLIILYV). The Cytoplasmic portion of the chain corresponds to 28–36 (QTESQQKSS).

The protein belongs to the PsbM family. As to quaternary structure, PSII is composed of 1 copy each of membrane proteins PsbA, PsbB, PsbC, PsbD, PsbE, PsbF, PsbH, PsbI, PsbJ, PsbK, PsbL, PsbM, PsbT, PsbX, PsbY, PsbZ, Psb30/Ycf12, peripheral proteins PsbO, CyanoQ (PsbQ), PsbU, PsbV, PsbU, PsbV and a large number of cofactors. It forms dimeric complexes. PSII binds multiple chlorophylls, carotenoids and specific lipids. serves as cofactor.

The protein resides in the cellular thylakoid membrane. In terms of biological role, one of the components of the core complex of photosystem II (PSII). PSII is a light-driven water:plastoquinone oxidoreductase that uses light energy to abstract electrons from H(2)O, generating O(2) and a proton gradient subsequently used for ATP formation. It consists of a core antenna complex that captures photons, and an electron transfer chain that converts photonic excitation into a charge separation. This subunit is found at the monomer-monomer interface. Probably involved in dimerization of PSII; at the monomer-monomer interface the only protein-protein contacts observed are between the 2 PsbM subunits. Lipids, chlorophylls and carotenoids contribute strongly to PSII dimerization. In Thermostichus vulcanus (Synechococcus vulcanus), this protein is Photosystem II reaction center protein M.